The sequence spans 434 residues: Mitochondrial distribution and morphology protein 12 (434 aa).

Residues 1-434 form the SMP-LTD domain; that stretch reads MSIDIDWERA…VYPSFWTFLV (434 aa). Over residues 70–83 the composition is skewed to acidic residues; the sequence is YEEDDNENFSESSE. Disordered stretches follow at residues 70-141 and 181-275; these read YEED…LRSP and TPLG…DDLP. Positions 86–97 are enriched in basic and acidic residues; sequence SPTREPVDRYGS. Over residues 215–237 the composition is skewed to polar residues; that stretch reads SAQSRPSTANTGNTLLSRGSMSS.

The protein belongs to the MDM12 family. As to quaternary structure, component of the ER-mitochondria encounter structure (ERMES) or MDM complex, composed of MMM1, MDM10, MDM12 and MDM34. An MMM1 homodimer associates with one molecule of MDM12 on each side in a pairwise head-to-tail manner, and the SMP-LTD domains of MMM1 and MDM12 generate a continuous hydrophobic tunnel for phospholipid trafficking.

The protein resides in the mitochondrion outer membrane. The protein localises to the endoplasmic reticulum membrane. In terms of biological role, component of the ERMES/MDM complex, which serves as a molecular tether to connect the endoplasmic reticulum (ER) and mitochondria. Components of this complex are involved in the control of mitochondrial shape and protein biogenesis, and function in nonvesicular lipid trafficking between the ER and mitochondria. MDM12 is required for the interaction of the ER-resident membrane protein MMM1 and the outer mitochondrial membrane-resident beta-barrel protein MDM10. The MDM12-MMM1 subcomplex functions in the major beta-barrel assembly pathway that is responsible for biogenesis of all mitochondrial outer membrane beta-barrel proteins, and acts in a late step after the SAM complex. The MDM10-MDM12-MMM1 subcomplex further acts in the TOM40-specific pathway after the action of the MDM12-MMM1 complex. Essential for establishing and maintaining the structure of mitochondria and maintenance of mtDNA nucleoids. This is Mitochondrial distribution and morphology protein 12 from Blastomyces gilchristii (strain SLH14081) (Blastomyces dermatitidis).